The primary structure comprises 685 residues: Protein arginine N-methyltransferase 7 (685 aa).

2 consecutive SAM-dependent MTase PRMT-type domains span residues 14–355 (QATW…YSLW) and 364–685 (AESI…LKSI).

The protein belongs to the class I-like SAM-binding methyltransferase superfamily. Protein arginine N-methyltransferase family. PRMT7 subfamily.

Functionally, essential arginine methyltransferase that can both catalyze the formation of omega-N monomethylarginine (MMA) and symmetrical dimethylarginine (sDMA). Specifically mediates the symmetrical dimethylation of arginine residues in the small nuclear ribonucleoproteins SmD1 and SmD3. This is Protein arginine N-methyltransferase 7 (Art7) from Drosophila willistoni (Fruit fly).